Reading from the N-terminus, the 24-residue chain is Brevinin-1Lb (24 aa).

Cys18 and Cys24 form a disulfide bridge.

As to expression, expressed by the skin glands.

The protein resides in the secreted. Its function is as follows. Antibacterial activity against Gram-positive bacterium S.aureus and Gram-negative bacterium E.coli. The protein is Brevinin-1Lb of Rana luteiventris (Columbia spotted frog).